The sequence spans 334 residues: Ornithine carbamoyltransferase subunit I (334 aa).

Carbamoyl phosphate contacts are provided by residues 56-59 (STRT), Gln-83, Arg-107, and 134-137 (HPTQ). L-ornithine contacts are provided by residues Asn-168, Asp-232, and 236 to 237 (SM). Zn(2+) is bound at residue Cys-274. Carbamoyl phosphate is bound by residues 274–275 (CL) and Arg-320.

Belongs to the aspartate/ornithine carbamoyltransferase superfamily. OTCase family. In E.coli strain K12, trimer of identical or non-identical chains are composed of ArgI (I) and/or ArgF (F). The trimer has the following composition: FFI, FFF, FII, III. E.coli strains B and W, which are known to contain only ArgI, produce only a trimer of identical chains (III).

Its subcellular location is the cytoplasm. It carries out the reaction carbamoyl phosphate + L-ornithine = L-citrulline + phosphate + H(+). It functions in the pathway amino-acid biosynthesis; L-arginine biosynthesis; L-arginine from L-ornithine and carbamoyl phosphate: step 1/3. With respect to regulation, reversely inhibited by N-(N-Sulfodiaminophosphinyl)-L-ornithine. Zinc is an allosteric regulator of the substrate-bound enzyme and a competitive inhibitor of the free enzyme. Reversibly catalyzes the transfer of the carbamoyl group from carbamoyl phosphate (CP) to the N(epsilon) atom of ornithine (ORN) to produce L-citrulline, which is a substrate for argininosuccinate synthetase, the enzyme involved in the final step in arginine biosynthesis. The protein is Ornithine carbamoyltransferase subunit I of Escherichia coli (strain K12).